The sequence spans 64 residues: Large ribosomal subunit protein bL35 (64 aa).

Residues 1 to 26 are compositionally biased toward basic residues; the sequence is MPKMKSHRGASKRFKRTASGKLKRGR. Disordered regions lie at residues 1–28 and 33–52; these read MPKM…GRAY and FGNK…MVSS.

Belongs to the bacterial ribosomal protein bL35 family.

The chain is Large ribosomal subunit protein bL35 from Exiguobacterium sibiricum (strain DSM 17290 / CCUG 55495 / CIP 109462 / JCM 13490 / 255-15).